The following is a 212-amino-acid chain: Hemagglutinin 2 (212 aa).

It is found in the secreted. Induces agglutination of neuraminidase-treated erythrocytes. The polypeptide is Hemagglutinin 2 (hag2) (Eikenella corrodens).